A 350-amino-acid polypeptide reads, in one-letter code: Cell division protein ZipA (350 aa).

The Periplasmic portion of the chain corresponds to 1-6; sequence MEDLQL. Residues 7–27 form a helical membrane-spanning segment; sequence VLFVLGAIAIVAVLVHGFWSI. At 28-350 the chain is on the cytoplasmic side; it reads RKQQPRTIKE…QYLARIRANA (323 aa). 3 disordered regions span residues 36-55, 65-136, and 187-213; these read KEQP…AEGF, VRKL…PSAR, and RVPA…EEPL. Basic and acidic residues-rich tracts occupy residues 65 to 109 and 116 to 131; these read VRKL…ESRA and AAHE…HEEP.

The protein belongs to the ZipA family. As to quaternary structure, interacts with FtsZ via their C-terminal domains.

It localises to the cell inner membrane. Its function is as follows. Essential cell division protein that stabilizes the FtsZ protofilaments by cross-linking them and that serves as a cytoplasmic membrane anchor for the Z ring. Also required for the recruitment to the septal ring of downstream cell division proteins. In Shewanella amazonensis (strain ATCC BAA-1098 / SB2B), this protein is Cell division protein ZipA.